The sequence spans 154 residues: MNDAATVLGTADLQEILRLLPHRYPFLLVDRIIEIDDDNSAIGIKNVTANEPHFTGHFPEKPIMPGVLLIEGMAQTAGAICARKTGIGSNLVYFMTIDNARFRKPVVPGDRVEFHVTKQKQRGNIWKFHCDAKVDGQLVAEADIGAMIVSKEDA.

Residue His57 is part of the active site.

The protein belongs to the thioester dehydratase family. FabZ subfamily.

It localises to the cytoplasm. The enzyme catalyses a (3R)-hydroxyacyl-[ACP] = a (2E)-enoyl-[ACP] + H2O. Involved in unsaturated fatty acids biosynthesis. Catalyzes the dehydration of short chain beta-hydroxyacyl-ACPs and long chain saturated and unsaturated beta-hydroxyacyl-ACPs. This chain is 3-hydroxyacyl-[acyl-carrier-protein] dehydratase FabZ, found in Sinorhizobium fredii (strain NBRC 101917 / NGR234).